Consider the following 428-residue polypeptide: Tyrosine--tRNA ligase (428 aa).

Position 41 (Y41) interacts with L-tyrosine. The short motif at P46–H55 is the 'HIGH' region element. The L-tyrosine site is built by Y179 and Q183. A 'KMSKS' region motif is present at residues K239 to T243. K242 contributes to the ATP binding site. In terms of domain architecture, S4 RNA-binding spans A361–G418.

Belongs to the class-I aminoacyl-tRNA synthetase family. TyrS type 1 subfamily. Homodimer.

It is found in the cytoplasm. It catalyses the reaction tRNA(Tyr) + L-tyrosine + ATP = L-tyrosyl-tRNA(Tyr) + AMP + diphosphate + H(+). Its function is as follows. Catalyzes the attachment of tyrosine to tRNA(Tyr) in a two-step reaction: tyrosine is first activated by ATP to form Tyr-AMP and then transferred to the acceptor end of tRNA(Tyr). This is Tyrosine--tRNA ligase from Citrobacter koseri (strain ATCC BAA-895 / CDC 4225-83 / SGSC4696).